Here is a 400-residue protein sequence, read N- to C-terminus: tRNA(Ile)-lysidine synthase (400 aa).

Serine 20–serine 25 contacts ATP.

It belongs to the tRNA(Ile)-lysidine synthase family.

The protein localises to the cytoplasm. It catalyses the reaction cytidine(34) in tRNA(Ile2) + L-lysine + ATP = lysidine(34) in tRNA(Ile2) + AMP + diphosphate + H(+). Functionally, ligates lysine onto the cytidine present at position 34 of the AUA codon-specific tRNA(Ile) that contains the anticodon CAU, in an ATP-dependent manner. Cytidine is converted to lysidine, thus changing the amino acid specificity of the tRNA from methionine to isoleucine. This is tRNA(Ile)-lysidine synthase from Wigglesworthia glossinidia brevipalpis.